Here is a 695-residue protein sequence, read N- to C-terminus: Segment polarity protein dishevelled homolog DVL-1 (695 aa).

The 85-residue stretch at 1-85 (MAETKIIYHM…RVVSWLVLAE (85 aa)) folds into the DIX domain. Positions 89-236 (SDAGSQGTDS…RLRQTDRASS (148 aa)) are disordered. The segment covering 142-151 (SHRRERARRR) has biased composition (basic residues). Positions 152–171 (NRDEAARTNGHPRGDRRREL) are enriched in basic and acidic residues. The span at 177 to 192 (SASTVLSSELESSSFI) shows a compositional bias: low complexity. Position 194 is a phosphoserine (serine 194). Residues 201 to 214 (SRLSSSTEQSTSSR) show a composition bias toward low complexity. A compositionally biased stretch (basic residues) spans 215 to 228 (LIRKHKCRRRKQRL). In terms of domain architecture, PDZ spans 251–323 (TVTLNMERHH…NDDAVRVLRE (73 aa)). Residues 425–499 (PDSGLEIRDR…SEQCYYVFGD (75 aa)) enclose the DEP domain. Positions 551–580 (PAYQDPGFSYGSGSAGSQQSEGSKSSGSTR) are enriched in low complexity. The interval 551-641 (PAYQDPGFSY…SQASAVAPGL (91 aa)) is disordered. Polar residues predominate over residues 622–635 (SQLSRGSSPRSQAS).

Belongs to the DSH family. As to quaternary structure, interacts with BRD7 and INVS. Interacts (via PDZ domain) with the VANGL1 and VANGL2 (via C-terminus). Interacts (via PDZ domain) with NXN. Interacts with CXXC4. Interacts with ARRB1; the interaction is enhanced by phosphorylation of DVL1. Interacts with CYLD. Interacts (via PDZ domain) with RYK. Self-associates (via DIX domain) and forms higher homooligomers. Interacts (via PDZ domain) with DACT1 and FZD7, where DACT1 and FZD7 compete for the same binding site. Interacts (via DEP domain) with MUSK; the interaction is direct and mediates the formation a DVL1, MUSK and PAK1 ternary complex involved in AChR clustering. Interacts (via PDZ domain) with TMEM88. Interacts with DCDC2. Interacts with FOXK2. Interacts with PKD1 (via extracellular domain). Interacts (via PDZ domain) with CCDC88C/DAPLE; competes with CCDC88C for binding to frizzled receptor FZD7 and dissociates from CCDC88C following initiation of non-canonical Wnt signaling when CCDC88C displaces DVL1 from ligand-activated FZD7. Ubiquitinated; undergoes both 'Lys-48'-linked ubiquitination, leading to its subsequent degradation by the ubiquitin-proteasome pathway, and 'Lys-63'-linked ubiquitination. The interaction with INVS is required for ubiquitination. Deubiquitinated by CYLD, which acts on 'Lys-63'-linked ubiquitin chains.

The protein localises to the cell membrane. The protein resides in the cytoplasm. It is found in the cytosol. It localises to the cytoplasmic vesicle. In terms of biological role, participates in Wnt signaling by binding to the cytoplasmic C-terminus of frizzled family members and transducing the Wnt signal to down-stream effectors. Plays a role both in canonical and non-canonical Wnt signaling. Plays a role in the signal transduction pathways mediated by multiple Wnt genes. Required for LEF1 activation upon WNT1 and WNT3A signaling. DVL1 and PAK1 form a ternary complex with MUSK which is important for MUSK-dependent regulation of AChR clustering during the formation of the neuromuscular junction (NMJ). The polypeptide is Segment polarity protein dishevelled homolog DVL-1 (Dvl1) (Rattus norvegicus (Rat)).